The sequence spans 607 residues: Elongation factor 4 (607 aa).

The 183-residue stretch at Ser-11 to Ala-193 folds into the tr-type G domain. GTP contacts are provided by residues Asp-23–Thr-28 and Asn-140–Asp-143.

The protein belongs to the TRAFAC class translation factor GTPase superfamily. Classic translation factor GTPase family. LepA subfamily.

Its subcellular location is the cell membrane. The catalysed reaction is GTP + H2O = GDP + phosphate + H(+). Required for accurate and efficient protein synthesis under certain stress conditions. May act as a fidelity factor of the translation reaction, by catalyzing a one-codon backward translocation of tRNAs on improperly translocated ribosomes. Back-translocation proceeds from a post-translocation (POST) complex to a pre-translocation (PRE) complex, thus giving elongation factor G a second chance to translocate the tRNAs correctly. Binds to ribosomes in a GTP-dependent manner. This chain is Elongation factor 4, found in Shouchella clausii (strain KSM-K16) (Alkalihalobacillus clausii).